The primary structure comprises 462 residues: Cysteine--tRNA ligase (462 aa).

Zn(2+) is bound at residue Cys28. The 'HIGH' region signature appears at 30 to 40 (VTAYDLCHIGH). Zn(2+) contacts are provided by Cys209, His234, and Glu238. The short motif at 266 to 270 (KMSKS) is the 'KMSKS' region element. Position 269 (Lys269) interacts with ATP.

This sequence belongs to the class-I aminoacyl-tRNA synthetase family. As to quaternary structure, monomer. Zn(2+) is required as a cofactor.

It is found in the cytoplasm. The catalysed reaction is tRNA(Cys) + L-cysteine + ATP = L-cysteinyl-tRNA(Cys) + AMP + diphosphate. The polypeptide is Cysteine--tRNA ligase (Baumannia cicadellinicola subsp. Homalodisca coagulata).